The chain runs to 450 residues: Cytidylate cyclase (450 aa).

Residues 97 to 236 (VTMFVDIRKS…LPVDMTAKLQ (140 aa)) form the Guanylate cyclase domain. Phe100 serves as a coordination point for a ribonucleoside 5'-triphosphate. Asp102, Ile103, and Asp146 together coordinate Mn(2+). Residues 318–450 (PNQFNFECFV…YRNIIGVYIK (133 aa)) form an AGS-C domain region.

This sequence belongs to the adenylyl cyclase class-4/guanylyl cyclase family. Pyrimidine cyclase subfamily. Homodimer. Mn(2+) serves as cofactor.

It localises to the cytoplasm. The catalysed reaction is CTP = 3',5'-cyclic CMP + diphosphate. In E.coli strain MG1655 transformed with both genes cCMP appears between 15 and 30 minutes after infection with phage T5 (at protein level). No cCMP accumulates in uninfected cells. In terms of biological role, pycsar (pyrimidine cyclase system for antiphage resistance) provides immunity against bacteriophage. The pyrimidine cyclase (PycC) synthesizes cyclic nucleotides in response to infection; these serve as specific second messenger signals. The signal activates the adjacent effector, leading to bacterial cell death and abortive phage infection. A clade E Pycsar system. Functionally, the pyrimidine cyclase gene of a two-gene Pycsar system, generates cyclic CMP (cCMP) from CTP in response to bacteriophage infection. Has little to no activity on ATP, GTP or UTP. Expression of this and adjacent effector EcPycTM (AC P0DV25) confers resistance to bacteriophage P1 and T5; expression of this gene alone does not confer resistance. When cells expressing the Pycsar system are infected by phage T5 at low multiplicity of infection (0.2 MOI) the culture survives, at 2.0 MOI bacteria enter growth arrest. The same cells enter growth arrest after exposure to 250 uM cCMP but not cUMP; thus the effector protein responds only to the cNMP produced by its cognate NTP cyclase. Some of the cells treated with cCMP have abnormal membrane protrusions. This chain is Cytidylate cyclase, found in Escherichia coli.